A 517-amino-acid chain; its full sequence is ATP synthase subunit alpha 1 (517 aa).

Residue 174-181 (GDRQTGKT) participates in ATP binding.

This sequence belongs to the ATPase alpha/beta chains family. In terms of assembly, F-type ATPases have 2 components, CF(1) - the catalytic core - and CF(0) - the membrane proton channel. CF(1) has five subunits: alpha(3), beta(3), gamma(1), delta(1), epsilon(1). CF(0) has three main subunits: a(1), b(2) and c(9-12). The alpha and beta chains form an alternating ring which encloses part of the gamma chain. CF(1) is attached to CF(0) by a central stalk formed by the gamma and epsilon chains, while a peripheral stalk is formed by the delta and b chains.

It localises to the cell inner membrane. It carries out the reaction ATP + H2O + 4 H(+)(in) = ADP + phosphate + 5 H(+)(out). Its function is as follows. Produces ATP from ADP in the presence of a proton gradient across the membrane. The alpha chain is a regulatory subunit. This chain is ATP synthase subunit alpha 1, found in Albidiferax ferrireducens (strain ATCC BAA-621 / DSM 15236 / T118) (Rhodoferax ferrireducens).